The primary structure comprises 493 residues: uncharacterized protein (493 aa).

An FAD-binding site is contributed by 8–37 (DFLVVGGGTCGCVVAARLSEDPSATVMLLE). His429 acts as the Proton acceptor in catalysis.

The protein belongs to the GMC oxidoreductase family. The cofactor is FAD.

This is an uncharacterized protein from Rhodococcus erythropolis (Arthrobacter picolinophilus).